Consider the following 326-residue polypeptide: tRNA U34 carboxymethyltransferase (326 aa).

Residues K95, W109, K114, G134, 184–185 (VE), Y204, and R319 each bind carboxy-S-adenosyl-L-methionine.

Belongs to the class I-like SAM-binding methyltransferase superfamily. CmoB family.

It carries out the reaction carboxy-S-adenosyl-L-methionine + 5-hydroxyuridine(34) in tRNA = 5-carboxymethoxyuridine(34) in tRNA + S-adenosyl-L-homocysteine + H(+). In terms of biological role, catalyzes carboxymethyl transfer from carboxy-S-adenosyl-L-methionine (Cx-SAM) to 5-hydroxyuridine (ho5U) to form 5-carboxymethoxyuridine (cmo5U) at position 34 in tRNAs. This Trichodesmium erythraeum (strain IMS101) protein is tRNA U34 carboxymethyltransferase.